The primary structure comprises 92 residues: Putative transcription elongation factor S-II-like protein 81R (92 aa).

Residues 51 to 91 (GTVKCPGCGSRRVHALQRQTRSADEPMTLFAMCSECGKRWT) form a TFIIS-type zinc finger. Positions 55, 58, 83, and 86 each coordinate Zn(2+).

In Dryophytes versicolor (chameleon treefrog), this protein is Putative transcription elongation factor S-II-like protein 81R.